Consider the following 476-residue polypeptide: Glycogen synthase (476 aa).

Lys-15 contacts ADP-alpha-D-glucose.

The protein belongs to the glycosyltransferase 1 family. Bacterial/plant glycogen synthase subfamily.

The enzyme catalyses [(1-&gt;4)-alpha-D-glucosyl](n) + ADP-alpha-D-glucose = [(1-&gt;4)-alpha-D-glucosyl](n+1) + ADP + H(+). The protein operates within glycan biosynthesis; glycogen biosynthesis. Synthesizes alpha-1,4-glucan chains using ADP-glucose. The protein is Glycogen synthase of Chlamydia pneumoniae (Chlamydophila pneumoniae).